Reading from the N-terminus, the 176-residue chain is Dual-action ribosomal maturation protein DarP (176 aa).

It belongs to the DarP family.

The protein localises to the cytoplasm. Member of a network of 50S ribosomal subunit biogenesis factors which assembles along the 30S-50S interface, preventing incorrect 23S rRNA structures from forming. Promotes peptidyl transferase center (PTC) maturation. In Aliivibrio fischeri (strain MJ11) (Vibrio fischeri), this protein is Dual-action ribosomal maturation protein DarP.